Here is a 583-residue protein sequence, read N- to C-terminus: MESKGASSCRLLFCLLISATVFRPGLGWYTVNSAYGDTIIIPCRLDVPQNLMFGKWKYEKPDGSPVFIAFRSSTKKSVQYDDVPEYKDRLNLSENYTLSISNARISDEKRFVCMLVTEDNVFEAPTIVKVFKQPSKPEIVSKALFLETEQLKKLGDCISEDSYPDGNITWYRNGKVLHPLEGAVVIIFKKEMDPVTQLYTMTSTLEYKTTKADIQMPFTCSVTYYGPSGQKTIHSEQAVFDIYYPTEQVTIQVLPPKNAIKEGDNITLKCLGNGNPPPEEFLFYLPGQPEGIRSSNTYTLTDVRRNATGDYKCSLIDKKSMIASTAITVHYLDLSLNPSGEVTRQIGDALPVSCTISASRNATVVWMKDNIRLRSSPSFSSLHYQDAGNYVCETALQEVEGLKKRESLTLIVEGKPQIKMTKKTDPSGLSKTIICHVEGFPKPAIQWTITGSGSVINQTEESPYINGRYYSKIIISPEENVTLTCTAENQLERTVNSLNVSAISIPEHDEADEISDENREKVNDQAKLIVGIVVGLLLAALVAGVVYWLYMKKSKTASKHVNKDLGNMEENKKLEENNHKTEA.

The first 27 residues, 1–27, serve as a signal peptide directing secretion; that stretch reads MESKGASSCRLLFCLLISATVFRPGLG. Ig-like V-type domains are found at residues 28–120 and 125–234; these read WYTV…TEDN and PTIV…KTIH. At 28–527 the chain is on the extracellular side; it reads WYTVNSAYGD…NREKVNDQAK (500 aa). 2 cysteine pairs are disulfide-bonded: C43/C113 and C157/C220. 9 N-linked (GlcNAc...) asparagine glycosylation sites follow: N91, N95, N167, N265, N306, N361, N457, N480, and N499. 3 consecutive Ig-like C2-type domains span residues 245–328, 333–409, and 416–501; these read PTEQ…TAIT, DLSL…ESLT, and PQIK…LNVS. 3 disulfide bridges follow: C270–C313, C354–C392, and C435–C485. Residues 528–549 traverse the membrane as a helical segment; it reads LIVGIVVGLLLAALVAGVVYWL. The Cytoplasmic portion of the chain corresponds to 550–583; it reads YMKKSKTASKHVNKDLGNMEENKKLEENNHKTEA. A disordered region spans residues 562 to 583; it reads NKDLGNMEENKKLEENNHKTEA. A compositionally biased stretch (basic and acidic residues) spans 569 to 583; sequence EENKKLEENNHKTEA.

As to quaternary structure, homodimer. Interacts (via extracellular domain) with CD6 (via extracellular domain). Homodimerization and interaction with CD6 involve the same region and cannot occur simultaneously. The affinity for CD6 is much higher than the affinity for self-association. Interacts (via glycosylated extracellular domain) with LGALS1 and LGALS3. Interaction with LGALS1 or LGALS3 inhibits interaction with CD6. Post-translationally, glycosylated. As to expression, detected on hematopoietic stem cells derived from umbilical cord blood. Detected on lymph vessel endothelial cells, skin and tonsil. Detected on peripheral blood monocytes. Detected on monocyte-derived dendritic cells (at protein level). Detected at low levels in spleen, placenta, liver. Expressed by activated T-cells, B-cells, monocytes and thymic epithelial cells. Isoform 1 and isoform 3 are detected in vein and artery endothelial cells, astrocytes, keratinocytes and artery smooth muscle cells. Expressed by neurons in the brain. Restricted expression in tumor cell lines. Detected in highly metastasizing melanoma cell lines.

The protein resides in the cell membrane. Its subcellular location is the cell projection. The protein localises to the axon. It is found in the dendrite. It localises to the secreted. Functionally, cell adhesion molecule that mediates both heterotypic cell-cell contacts via its interaction with CD6, as well as homotypic cell-cell contacts. Promotes T-cell activation and proliferation via its interactions with CD6. Contributes to the formation and maturation of the immunological synapse via its interactions with CD6. Mediates homotypic interactions with cells that express ALCAM. Acts as a ligand for the LILRB4 receptor, enhancing LILRB4-mediated inhibition of T cell proliferation. Required for normal hematopoietic stem cell engraftment in the bone marrow. Mediates attachment of dendritic cells onto endothelial cells via homotypic interaction. Inhibits endothelial cell migration and promotes endothelial tube formation via homotypic interactions. Required for normal organization of the lymph vessel network. Required for normal hematopoietic stem cell engraftment in the bone marrow. Plays a role in hematopoiesis; required for normal numbers of hematopoietic stem cells in bone marrow. Promotes in vitro osteoblast proliferation and differentiation. Promotes neurite extension, axon growth and axon guidance; axons grow preferentially on surfaces that contain ALCAM. Mediates outgrowth and pathfinding for retinal ganglion cell axons. In terms of biological role, inhibits activities of membrane-bound isoforms by competing for the same interaction partners. Inhibits cell attachment via homotypic interactions. Promotes endothelial cell migration. Inhibits endothelial cell tube formation. This is CD166 antigen (ALCAM) from Homo sapiens (Human).